The following is a 589-amino-acid chain: MMRSHYCGALNRGNIGQEVTLSGWVHRRRDLGGLIFIDMRDREGIVQVCFDPKYQEALTAAADLRNEFCIQIKGEVTARPGNQINKNMATGEVEVLAKALSVYNASDVLPLDFNQNNTEEQRLKYRYLDLRRPEMAQRLKTRAKITSFVRRFMDDHGFLDIETPMLTKATPEGARDYLVPSRVHKGKFYALPQSPQLFKQLLMMSGFDRYYQIVKCFRDEDLRADRQPEFTQIDVETSFLTAPEVRAIMENMIRGLWLNILGADLGKFPIMTWNEAMTRFGSDKPDLRNPLEIADVADIVKDVDFKVFADPANDANGRVSVIRVPNGASITRKQIDEYTQFVGIYGAKGLAWLKVNDVNAGLEGVQSPIAKFLSEEKIKAIFDRTSAQTGDILFFGADKWQIATDAMGALRLKLGRDLGLTRLDEWQPLWVIDFPMFECDEEGNLAAMHHPFTSPKDFSPEQLEADPTAAVANAYDMVINGYEVGGGSVRIFDPKMQQTVFRILGIDEQQQREKFGFLLDALKFGTPPHAGLAFGLDRLTMLLTGTDNIRDVIAFPKTTAAACLMTEAPSFANQQALEELAITVVTKEE.

Glutamate 172 contacts L-aspartate. The segment at glutamine 196 to lysine 199 is aspartate. Arginine 218 lines the L-aspartate pocket. ATP contacts are provided by residues arginine 218–glutamate 220 and glutamine 227. Histidine 449 contributes to the L-aspartate binding site. Glutamate 483 serves as a coordination point for ATP. Arginine 490 lines the L-aspartate pocket. Glycine 535 to arginine 538 is a binding site for ATP.

Belongs to the class-II aminoacyl-tRNA synthetase family. Type 1 subfamily. Homodimer.

It is found in the cytoplasm. The catalysed reaction is tRNA(Asp) + L-aspartate + ATP = L-aspartyl-tRNA(Asp) + AMP + diphosphate. Functionally, catalyzes the attachment of L-aspartate to tRNA(Asp) in a two-step reaction: L-aspartate is first activated by ATP to form Asp-AMP and then transferred to the acceptor end of tRNA(Asp). This chain is Aspartate--tRNA ligase, found in Actinobacillus succinogenes (strain ATCC 55618 / DSM 22257 / CCUG 43843 / 130Z).